A 152-amino-acid chain; its full sequence is Large ribosomal subunit protein uL13 (152 aa).

This sequence belongs to the universal ribosomal protein uL13 family. As to quaternary structure, part of the 50S ribosomal subunit.

Its function is as follows. This protein is one of the early assembly proteins of the 50S ribosomal subunit, although it is not seen to bind rRNA by itself. It is important during the early stages of 50S assembly. This is Large ribosomal subunit protein uL13 from Wolbachia sp. subsp. Drosophila simulans (strain wRi).